The chain runs to 160 residues: Endoribonuclease YbeY (160 aa).

Residues H123, H127, and H133 each contribute to the Zn(2+) site.

This sequence belongs to the endoribonuclease YbeY family. Zn(2+) is required as a cofactor.

It localises to the cytoplasm. Its function is as follows. Single strand-specific metallo-endoribonuclease involved in late-stage 70S ribosome quality control and in maturation of the 3' terminus of the 16S rRNA. The polypeptide is Endoribonuclease YbeY (Shouchella clausii (strain KSM-K16) (Alkalihalobacillus clausii)).